We begin with the raw amino-acid sequence, 296 residues long: Phosphoribosylaminoimidazole-succinocarboxamide synthase (296 aa).

The protein belongs to the SAICAR synthetase family.

It catalyses the reaction 5-amino-1-(5-phospho-D-ribosyl)imidazole-4-carboxylate + L-aspartate + ATP = (2S)-2-[5-amino-1-(5-phospho-beta-D-ribosyl)imidazole-4-carboxamido]succinate + ADP + phosphate + 2 H(+). It functions in the pathway purine metabolism; IMP biosynthesis via de novo pathway; 5-amino-1-(5-phospho-D-ribosyl)imidazole-4-carboxamide from 5-amino-1-(5-phospho-D-ribosyl)imidazole-4-carboxylate: step 1/2. This chain is Phosphoribosylaminoimidazole-succinocarboxamide synthase, found in Citrifermentans bemidjiense (strain ATCC BAA-1014 / DSM 16622 / JCM 12645 / Bem) (Geobacter bemidjiensis).